The chain runs to 61 residues: Venom protein 22.1 (61 aa).

The N-terminal stretch at 1–18 (MDIKGLLVILFFVLLITG) is a signal peptide.

The protein belongs to the non-disulfide-bridged peptide (NDBP) superfamily. Long chain multifunctional peptide (group 2) family. In terms of tissue distribution, expressed by the venom gland.

The protein localises to the secreted. This Lychas mucronatus (Chinese swimming scorpion) protein is Venom protein 22.1.